A 540-amino-acid polypeptide reads, in one-letter code: Phenylalanine--tRNA ligase beta subunit (540 aa).

The 78-residue stretch at 270-347 (MTPRTLNVPR…IGYGFDKIKS (78 aa)) folds into the B5 domain. 4 residues coordinate Mg(2+): Asp-325, Asp-331, Glu-334, and Asp-335.

The protein belongs to the phenylalanyl-tRNA synthetase beta subunit family. Type 2 subfamily. Tetramer of two alpha and two beta subunits. The cofactor is Mg(2+).

It is found in the cytoplasm. The catalysed reaction is tRNA(Phe) + L-phenylalanine + ATP = L-phenylalanyl-tRNA(Phe) + AMP + diphosphate + H(+). The protein is Phenylalanine--tRNA ligase beta subunit of Methanococcoides burtonii (strain DSM 6242 / NBRC 107633 / OCM 468 / ACE-M).